The primary structure comprises 539 residues: GMP synthase [glutamine-hydrolyzing] (539 aa).

A Glutamine amidotransferase type-1 domain is found at 4 to 202; sequence KVLILDFGSQ…VLEIAGAKPD (199 aa). Catalysis depends on cysteine 81, which acts as the Nucleophile. Active-site residues include histidine 176 and glutamate 178. One can recognise a GMPS ATP-PPase domain in the interval 203–395; it reads WVMRDHIDEA…LGLPHEMVYR (193 aa). 230–236 contributes to the ATP binding site; the sequence is SGGVDSS.

As to quaternary structure, homodimer.

The enzyme catalyses XMP + L-glutamine + ATP + H2O = GMP + L-glutamate + AMP + diphosphate + 2 H(+). It participates in purine metabolism; GMP biosynthesis; GMP from XMP (L-Gln route): step 1/1. In terms of biological role, catalyzes the synthesis of GMP from XMP. The protein is GMP synthase [glutamine-hydrolyzing] of Ralstonia pickettii (strain 12J).